Consider the following 1187-residue polypeptide: DNA-directed RNA polymerase subunit beta (1187 aa).

The interval 1150–1187 (KDEDDDPASSADDLGFNIGARPDAAAKEDQKAEEPEYQ) is disordered. A compositionally biased stretch (basic and acidic residues) spans 1173–1187 (AAAKEDQKAEEPEYQ).

The protein belongs to the RNA polymerase beta chain family. The RNAP catalytic core consists of 2 alpha, 1 beta, 1 beta' and 1 omega subunit. When a sigma factor is associated with the core the holoenzyme is formed, which can initiate transcription.

The catalysed reaction is RNA(n) + a ribonucleoside 5'-triphosphate = RNA(n+1) + diphosphate. Functionally, DNA-dependent RNA polymerase catalyzes the transcription of DNA into RNA using the four ribonucleoside triphosphates as substrates. The polypeptide is DNA-directed RNA polymerase subunit beta (Bifidobacterium longum subsp. infantis (strain ATCC 15697 / DSM 20088 / JCM 1222 / NCTC 11817 / S12)).